A 433-amino-acid chain; its full sequence is MCFSPILEINMQSESNITVRDDIDDINTNMYQPLSYPLSFQVSLTGFLMLEIVLGLGSNLTVLVLYCMKSNLINSVSNIITMNLHVLDVIICVGCIPLTIVILLLSLESNTALICCFHEACVSFASVSTAINVFAITLDRYDISVKPANRILTMGRAVMLMISIWIFSFFSFLIPFIEVNFFSLQSGNTWENKTLLCVSTNEYYTELGMYYHLLVQIPIFFFTVVVMLITYTKILQALNIRIGTRFSTGQKKKARKKKTISLTTQHEATDMSQSSGGRNVVFGVRTSVSVIIALRRAVKRHRERRERQKRVFRMSLLIISTFLLCWTPISVLNTTILCLGPSDLLVKLRLCFLVMAYGTTIFHPLLYAFTRQKFQKVLKSKMKKRVVSIVEADPLPNNAVIHNSWIDPKRNKKITFEDSEIREKCLVPQVVTD.

At 1–45 (MCFSPILEINMQSESNITVRDDIDDINTNMYQPLSYPLSFQVSLT) the chain is on the extracellular side. The N-linked (GlcNAc...) asparagine glycan is linked to N16. A helical transmembrane segment spans residues 46-66 (GFLMLEIVLGLGSNLTVLVLY). At 67–85 (CMKSNLINSVSNIITMNLH) the chain is on the cytoplasmic side. A helical membrane pass occupies residues 86-106 (VLDVIICVGCIPLTIVILLLS). Residues 107 to 115 (LESNTALIC) are Extracellular-facing. Residues 116–136 (CFHEACVSFASVSTAINVFAI) form a helical membrane-spanning segment. The Cytoplasmic segment spans residues 137–156 (TLDRYDISVKPANRILTMGR). The helical transmembrane segment at 157 to 177 (AVMLMISIWIFSFFSFLIPFI) threads the bilayer. The Extracellular portion of the chain corresponds to 178 to 208 (EVNFFSLQSGNTWENKTLLCVSTNEYYTELG). N-linked (GlcNAc...) asparagine glycosylation occurs at N192. The helical transmembrane segment at 209–229 (MYYHLLVQIPIFFFTVVVMLI) threads the bilayer. Residues 230 to 315 (TYTKILQALN…ERQKRVFRMS (86 aa)) are Cytoplasmic-facing. A helical membrane pass occupies residues 316-336 (LLIISTFLLCWTPISVLNTTI). Over 337–349 (LCLGPSDLLVKLR) the chain is Extracellular. The helical transmembrane segment at 350-370 (LCFLVMAYGTTIFHPLLYAFT) threads the bilayer. Over 371–433 (RQKFQKVLKS…KCLVPQVVTD (63 aa)) the chain is Cytoplasmic.

The protein belongs to the G-protein coupled receptor 1 family. High expression in adult and fetal heart tissue. Expressed in the brain, with enrichment in the accumbens, amygdala, cerebellum, cortex, and hippocampus regions.

It is found in the cell membrane. In terms of biological role, orphan G-protein coupled receptor. Seems to act through a G(i)/G(o) mediated pathway. May be involved in ciliogenesis. This chain is G-protein coupled receptor 22, found in Homo sapiens (Human).